We begin with the raw amino-acid sequence, 303 residues long: Probable cell division protein WhiA (303 aa).

A DNA-binding region (H-T-H motif) is located at residues 272 to 303 (SIQQIADSLAVPLTKSGVNHRLRKINKIAEDL).

The protein belongs to the WhiA family.

Functionally, involved in cell division and chromosome segregation. The sequence is that of Probable cell division protein WhiA from Streptococcus mutans serotype c (strain ATCC 700610 / UA159).